We begin with the raw amino-acid sequence, 331 residues long: Syntaxin-43 (331 aa).

The Cytoplasmic portion of the chain corresponds to 1–305 (MATRNRTLLF…KAERTQRQGG (305 aa)). 2 disordered regions span residues 20 to 45 (VRAP…KSGL) and 59 to 80 (PNRS…GTIT). Residues 31–40 (TLTEHNSLTG) are compositionally biased toward polar residues. A coiled-coil region spans residues 124 to 154 (KEDQHQIETLTQEVTFLLKKSEKQLQRLSAA). One can recognise a t-SNARE coiled-coil homology domain in the interval 235–297 (EEISIEREKE…DDGLKQLQKA (63 aa)). Residues 306–326 (MVMCASVLVILCFIMLVLLIL) traverse the membrane as a helical; Anchor for type IV membrane protein segment. Over 327–331 (KEILL) the chain is Vesicular.

This sequence belongs to the syntaxin family. As to quaternary structure, part of the t-SNARE complex. Expressed at low levels in roots, stems, flowers and leaves.

It is found in the golgi apparatus. Its subcellular location is the trans-Golgi network membrane. Its function is as follows. Contributes to the regulation of secretory and vacuolar transport pathways in the post-Golgi network, and to the maintenance of the Golgi apparatus and trans-Golgi network (TGN) morphologies. Vesicle trafficking protein that functions in the secretory pathway and mediates liposome fusion. Required for extracellular resistance responses to a fungal pathogen. Also involved in the protection of chloroplasts from salicylic acid-dependent biotic stress. The protein is Syntaxin-43 of Arabidopsis thaliana (Mouse-ear cress).